A 229-amino-acid chain; its full sequence is Orotidine 5'-phosphate decarboxylase (229 aa).

Substrate is bound by residues Asp-9, Lys-31, Asp-58–Thr-67, Thr-121, Arg-179, Gln-188, Gly-208, and Arg-209. Lys-60 acts as the Proton donor in catalysis.

Belongs to the OMP decarboxylase family. Type 1 subfamily. As to quaternary structure, homodimer.

It catalyses the reaction orotidine 5'-phosphate + H(+) = UMP + CO2. It functions in the pathway pyrimidine metabolism; UMP biosynthesis via de novo pathway; UMP from orotate: step 2/2. Catalyzes the decarboxylation of orotidine 5'-monophosphate (OMP) to uridine 5'-monophosphate (UMP). This chain is Orotidine 5'-phosphate decarboxylase, found in Lawsonia intracellularis (strain PHE/MN1-00).